Reading from the N-terminus, the 172-residue chain is dCTP deaminase (172 aa).

Residues 97-102 (RSSFAR) and Asp113 contribute to the dCTP site. The Proton donor/acceptor role is filled by Glu123. The dCTP site is built by Tyr155 and Gln162.

The protein belongs to the dCTP deaminase family. In terms of assembly, homotrimer.

It carries out the reaction dCTP + H2O + H(+) = dUTP + NH4(+). It functions in the pathway pyrimidine metabolism; dUMP biosynthesis; dUMP from dCTP (dUTP route): step 1/2. In terms of biological role, catalyzes the deamination of dCTP to dUTP. This is dCTP deaminase from Metallosphaera sedula (strain ATCC 51363 / DSM 5348 / JCM 9185 / NBRC 15509 / TH2).